Here is a 394-residue protein sequence, read N- to C-terminus: Tetracycline resistance protein, class D (394 aa).

12 helical membrane-spanning segments follow: residues 6–26 (VIAL…MPVL), 42–62 (HYGI…PLLG), 73–93 (VLLL…LSNV), 94–114 (LWML…GAVA), 135–155 (GAAF…AGDI), 159–179 (LPFV…FFIF), 198–218 (GISF…FFTA), 243–263 (AVGF…AVVA), 274–294 (TIIF…SAIT), 296–316 (GWMV…LPAL), 335–355 (VLVS…AFIF), and 364–384 (GTVW…CLLI).

It belongs to the major facilitator superfamily. TCR/Tet family.

It is found in the cell inner membrane. Its function is as follows. Resistance to tetracycline by an active tetracycline efflux. This is an energy-dependent process that decreases the accumulation of the antibiotic in whole cells. This protein functions as a metal-tetracycline/H(+) antiporter. This is Tetracycline resistance protein, class D (tetA) from Salmonella ordonez.